Reading from the N-terminus, the 117-residue chain is Immunoglobulin kappa variable 1-27 (117 aa).

The signal sequence occupies residues 1–22 (MDMRVPAQLLGLLLLWLPDTRC). The interval 23–45 (DIQMTQSPSSLSASVGDRVTITC) is framework-1. The Ig-like domain occupies 23–117 (DIQMTQSPSS…YYCQKYNSAP (95 aa)). A disulfide bridge connects residues cysteine 45 and cysteine 110. The tract at residues 46 to 56 (RASQGISNYLA) is complementarity-determining-1. A framework-2 region spans residues 57 to 71 (WYQQKPGKVPKLLIY). A complementarity-determining-2 region spans residues 72–78 (AASTLQS). Positions 79–110 (GVPSRFSGSGSGTDFTLTISSLQPEDVATYYC) are framework-3. A complementarity-determining-3 region spans residues 111–117 (QKYNSAP).

In terms of assembly, immunoglobulins are composed of two identical heavy chains and two identical light chains; disulfide-linked.

The protein localises to the secreted. It is found in the cell membrane. Functionally, v region of the variable domain of immunoglobulin light chains that participates in the antigen recognition. Immunoglobulins, also known as antibodies, are membrane-bound or secreted glycoproteins produced by B lymphocytes. In the recognition phase of humoral immunity, the membrane-bound immunoglobulins serve as receptors which, upon binding of a specific antigen, trigger the clonal expansion and differentiation of B lymphocytes into immunoglobulins-secreting plasma cells. Secreted immunoglobulins mediate the effector phase of humoral immunity, which results in the elimination of bound antigens. The antigen binding site is formed by the variable domain of one heavy chain, together with that of its associated light chain. Thus, each immunoglobulin has two antigen binding sites with remarkable affinity for a particular antigen. The variable domains are assembled by a process called V-(D)-J rearrangement and can then be subjected to somatic hypermutations which, after exposure to antigen and selection, allow affinity maturation for a particular antigen. The sequence is that of Immunoglobulin kappa variable 1-27 from Homo sapiens (Human).